A 209-amino-acid polypeptide reads, in one-letter code: Ribosomal RNA large subunit methyltransferase E (209 aa).

The S-adenosyl-L-methionine site is built by Gly63, Trp65, Asp83, Asp99, and Asp124. The active-site Proton acceptor is the Lys164.

This sequence belongs to the class I-like SAM-binding methyltransferase superfamily. RNA methyltransferase RlmE family.

It localises to the cytoplasm. It catalyses the reaction uridine(2552) in 23S rRNA + S-adenosyl-L-methionine = 2'-O-methyluridine(2552) in 23S rRNA + S-adenosyl-L-homocysteine + H(+). Functionally, specifically methylates the uridine in position 2552 of 23S rRNA at the 2'-O position of the ribose in the fully assembled 50S ribosomal subunit. In Pseudoalteromonas atlantica (strain T6c / ATCC BAA-1087), this protein is Ribosomal RNA large subunit methyltransferase E.